We begin with the raw amino-acid sequence, 336 residues long: Glyceraldehyde-3-phosphate dehydrogenase, chromosomal (336 aa).

NAD(+)-binding positions include 12–13, Asp37, Arg81, and Ser123; that span reads RI. Residues 154–156 and Thr185 each bind D-glyceraldehyde 3-phosphate; that span reads SCT. Cys155 acts as the Nucleophile in catalysis. An NAD(+)-binding site is contributed by Asn186. D-glyceraldehyde 3-phosphate-binding positions include Arg200, 213–214, and Arg236; that span reads TG. Asn317 is a binding site for NAD(+).

It belongs to the glyceraldehyde-3-phosphate dehydrogenase family. Homotetramer.

The catalysed reaction is D-glyceraldehyde 3-phosphate + phosphate + NAD(+) = (2R)-3-phospho-glyceroyl phosphate + NADH + H(+). It participates in carbohydrate biosynthesis; Calvin cycle. In terms of biological role, could be involved in carbon fixation as a component of the Calvin cycle. Catalyzes the oxidative phosphorylation of glyceraldehyde 3-phosphate (G3P) to 1,3-bisphosphoglycerate (BPG) using the cofactor NAD. The first reaction step involves the formation of a hemiacetal intermediate between G3P and a cysteine residue, and this hemiacetal intermediate is then oxidized to a thioester, with concomitant reduction of NAD to NADH. The reduced NADH is then exchanged with the second NAD, and the thioester is attacked by a nucleophilic inorganic phosphate to produce BPG. The chain is Glyceraldehyde-3-phosphate dehydrogenase, chromosomal (cbbGC) from Cupriavidus necator (strain ATCC 17699 / DSM 428 / KCTC 22496 / NCIMB 10442 / H16 / Stanier 337) (Ralstonia eutropha).